A 306-amino-acid polypeptide reads, in one-letter code: Phospho-N-acetylmuramoyl-pentapeptide-transferase (306 aa).

Helical transmembrane passes span 1–21 (MDIYSAATLLAEFVLGIIIFP), 49–69 (GTPTAGGIVFISLTVIAGLIL), 75–95 (LIFTLLFYGFIGFLDDFVSIV), 104–124 (AWQKLALQFLFSIWIAYTILQ), 130–150 (IFGITVPSWLFYLFTMLLVSG), 160–180 (GIDGLAGWVFVTSMIPFMFFS), 182–202 (SSMEYKAIFVIIMPLLSFLVY), 209–229 (VFMGDTGSLALGAYISTYALM), 234–254 (LSLLFFTPIFLLETISVILQV), and 284–304 (IVGVFSAWNLAIAIFYIAFFL).

The protein belongs to the glycosyltransferase 4 family. MraY subfamily. The cofactor is Mg(2+).

The protein resides in the cell inner membrane. The enzyme catalyses UDP-N-acetyl-alpha-D-muramoyl-L-alanyl-gamma-D-glutamyl-meso-2,6-diaminopimeloyl-D-alanyl-D-alanine + di-trans,octa-cis-undecaprenyl phosphate = di-trans,octa-cis-undecaprenyl diphospho-N-acetyl-alpha-D-muramoyl-L-alanyl-D-glutamyl-meso-2,6-diaminopimeloyl-D-alanyl-D-alanine + UMP. The protein operates within cell wall biogenesis; peptidoglycan biosynthesis. Catalyzes the initial step of the lipid cycle reactions in the biosynthesis of the cell wall peptidoglycan: transfers peptidoglycan precursor phospho-MurNAc-pentapeptide from UDP-MurNAc-pentapeptide onto the lipid carrier undecaprenyl phosphate, yielding undecaprenyl-pyrophosphoryl-MurNAc-pentapeptide, known as lipid I. The sequence is that of Phospho-N-acetylmuramoyl-pentapeptide-transferase from Fervidobacterium nodosum (strain ATCC 35602 / DSM 5306 / Rt17-B1).